We begin with the raw amino-acid sequence, 518 residues long: MSIAVLDRPMSRQDTPSASSVPSACDCMLEVRGVGKSFPGVVALDDVRLRVRRGTVHALMGENGAGKSTLMKIIAGVHAPDRGEIRLKGEPVVLHGPLDALNRGIAMIHQELNLMPYMTVAENIWIRREPRNRCGLVDHAELRRRTQALFARLAIDIDPEAEVRTLTVASRQMVEIAKAVSFDSEVLIMDEPTSALSDVEVHHLFRIIRQLREQGKGIVYITHKMDELFEIADEFSVFRDGKSIGTHAASDVTRDDIIRMMVGREITQMFPKADVPIGDVVLSVKNLCLHGVFRDVSFDLRAGEILGVAGLVGSGRSNVAEALFGVVPASSGEIRLDGERVSIRTPAQAMRYGMAFLTEDRKDTGCFLNLDLLANMEAAVLQRHYMTCGFVRRGALKQDCEAMSRTLRVKSPGLHEEIQNLSGGNQQKVLIGRWLLTHPRILILDEPTRGIDVGAKAEIHRLVSALAGEGVAVLMISSEMPEVLGMSDRIMVMHEGRVTGIVDRKDASQVRVMELASR.

Positions 1–22 (MSIAVLDRPMSRQDTPSASSVP) are disordered. Residues 12-22 (RQDTPSASSVP) show a composition bias toward polar residues. ABC transporter domains lie at 29 to 265 (LEVR…VGRE) and 275 to 515 (VPIG…VMEL). Position 61 to 68 (61 to 68 (GENGAGKS)) interacts with ATP.

It belongs to the ABC transporter superfamily. Carbohydrate importer 2 (CUT2) (TC 3.A.1.2) family.

The protein localises to the cell inner membrane. The catalysed reaction is D-ribose(out) + ATP + H2O = D-ribose(in) + ADP + phosphate + H(+). It carries out the reaction D-galactose(out) + ATP + H2O = D-galactose(in) + ADP + phosphate + H(+). Part of an ABC transporter complex involved in carbohydrate import. Could be involved in ribose, galactose and/or methyl galactoside import. Responsible for energy coupling to the transport system. The protein is Putative ribose/galactose/methyl galactoside import ATP-binding protein of Ralstonia nicotianae (strain ATCC BAA-1114 / GMI1000) (Ralstonia solanacearum).